The primary structure comprises 410 residues: Serine hydroxymethyltransferase (410 aa).

Residues leucine 119 and 123 to 125 (GHL) contribute to the (6S)-5,6,7,8-tetrahydrofolate site. Lysine 228 carries the N6-(pyridoxal phosphate)lysine modification. Residue 351-353 (SPF) participates in (6S)-5,6,7,8-tetrahydrofolate binding.

It belongs to the SHMT family. In terms of assembly, homodimer. The cofactor is pyridoxal 5'-phosphate.

It localises to the cytoplasm. It carries out the reaction (6R)-5,10-methylene-5,6,7,8-tetrahydrofolate + glycine + H2O = (6S)-5,6,7,8-tetrahydrofolate + L-serine. Its pathway is one-carbon metabolism; tetrahydrofolate interconversion. It functions in the pathway amino-acid biosynthesis; glycine biosynthesis; glycine from L-serine: step 1/1. In terms of biological role, catalyzes the reversible interconversion of serine and glycine with tetrahydrofolate (THF) serving as the one-carbon carrier. This reaction serves as the major source of one-carbon groups required for the biosynthesis of purines, thymidylate, methionine, and other important biomolecules. Also exhibits THF-independent aldolase activity toward beta-hydroxyamino acids, producing glycine and aldehydes, via a retro-aldol mechanism. The sequence is that of Serine hydroxymethyltransferase from Clostridium perfringens (strain ATCC 13124 / DSM 756 / JCM 1290 / NCIMB 6125 / NCTC 8237 / Type A).